The following is a 699-amino-acid chain: Elongation factor G 1 (699 aa).

The tr-type G domain maps to 8–290 (ERYRNIGICA…AVIEYLPSPT (283 aa)). GTP is bound by residues 17 to 24 (AHVDAGKT), 88 to 92 (DTPGH), and 142 to 145 (NKMD).

It belongs to the TRAFAC class translation factor GTPase superfamily. Classic translation factor GTPase family. EF-G/EF-2 subfamily.

The protein localises to the cytoplasm. Functionally, catalyzes the GTP-dependent ribosomal translocation step during translation elongation. During this step, the ribosome changes from the pre-translocational (PRE) to the post-translocational (POST) state as the newly formed A-site-bound peptidyl-tRNA and P-site-bound deacylated tRNA move to the P and E sites, respectively. Catalyzes the coordinated movement of the two tRNA molecules, the mRNA and conformational changes in the ribosome. The chain is Elongation factor G 1 from Hahella chejuensis (strain KCTC 2396).